A 144-amino-acid polypeptide reads, in one-letter code: HMG1/2-like protein (144 aa).

Disordered regions lie at residues 1–42 and 85–144; these read MKGG…PPSA and PFIS…EDDD. Basic and acidic residues-rich tracts occupy residues 8 to 35 and 89 to 99; these read AKSD…DPNK and KAEKRKQEYEK. Residues 36–105 constitute a DNA-binding region (HMG box); the sequence is PKRPPSAFFV…EYEKNLQAYN (70 aa). Residues 126–144 show a composition bias toward acidic residues; the sequence is NDDDEDQDGSGEDDSEDDD.

It belongs to the HMGB family. In terms of tissue distribution, expressed at higher levels in dark-grown tissues, such as roots; and at lower levels in light-grown tissues, such as cotyledons and stems.

Its subcellular location is the nucleus. The sequence is that of HMG1/2-like protein from Ipomoea nil (Japanese morning glory).